Reading from the N-terminus, the 534-residue chain is Cytochrome P450 monooxygenase btcB (534 aa).

The N-linked (GlcNAc...) asparagine glycan is linked to Asn20. Residues 41-61 (ALAFLCGALLFGFVYSVFYNL) traverse the membrane as a helical segment. N-linked (GlcNAc...) asparagine glycans are attached at residues Asn335, Asn413, and Asn431. Position 484 (Cys484) interacts with heme.

Belongs to the cytochrome P450 family. Heme is required as a cofactor.

It is found in the membrane. It functions in the pathway secondary metabolite biosynthesis; terpenoid biosynthesis. Its function is as follows. Cytochrome P4590 monooxygenase part of the gene cluster that mediates the biosynthesis of betaestacins. The bifunctional terpene synthase btcA converts isopentenyl diphosphate (IPP) and dimethylallyl diphosphate (DMAPP) into the sesterterpene betaestacin I. The C-terminal prenyltransferase (PT) domain of btcA catalyzes formation of GFPP, whereas the N-terminal terpene cyclase (TC) domain catalyzes the cyclization of GFPP into betaestacin I. The cytochrome P450 monooxygenase btcB oxidizes the C25 methyl group of betaestacin I to yield the carboxylic acid betaestacin IV via the alcohol betaestacin III. The cytochrome P450 monooxygenase btcC further catalyzes the multistep oxidation of betaestacin IV to produce several compounds, including betaestacins Va, Vb, Vc and VI. This chain is Cytochrome P450 monooxygenase btcB, found in Colletotrichum orbiculare (strain 104-T / ATCC 96160 / CBS 514.97 / LARS 414 / MAFF 240422) (Cucumber anthracnose fungus).